Here is a 574-residue protein sequence, read N- to C-terminus: Lipase maturation factor 1 (574 aa).

Positions 1–39 (MRPDSLVMAAPEGSLRKRKVGGAEHSPASQPSLARDPAD) are disordered. The Cytoplasmic segment spans residues 1 to 49 (MRPDSLVMAAPEGSLRKRKVGGAEHSPASQPSLARDPADSPARLHTGTF). Residues 50–72 (WLTRIVLLRALAFIYFVAFLVAF) form a helical membrane-spanning segment. Residues 73–127 (NQNKALIGDRGLLPCKLYLKNVQEYFQGSTGWAAWTYAPTIMWLLDWSDMNFNLD) lie on the Lumenal side of the membrane. The chain crosses the membrane as a helical span at residues 128–151 (LIALLGLGISSFVLVTGCANMILM). At 152–207 (TALWALYMSLVNVGQIWYSFGWESQLLETGFLGIFLSPLWTLSRLPKNTPTSQIVL) the chain is on the cytoplasmic side. Residues 208–221 (WGFRWLIFRIMLGA) traverse the membrane as a helical segment. Residues 222–292 (GLIKVRGDKC…LGRRMRILHG (71 aa)) lie on the Lumenal side of the membrane. The helical transmembrane segment at 293-321 (VLQILFQVILIISGNLSFLNWLTIVPSLA) threads the bilayer. Over 322–367 (CFDDAALGFLFPSGPQGLKKQVLEIQREDTQRVQPKPRDRGCLVRQ) the chain is Cytoplasmic. Residues 368–388 (VVNISLGILVAWLSVPVVINL) traverse the membrane as a helical segment. Topologically, residues 389–574 (LSSRQIMNTS…LPEPPSRHTR (186 aa)) are lumenal.

The protein belongs to the lipase maturation factor family. Interacts with LPL and SEL1L. Expressed in all tissues synthesizing lipoprotein lipase (Lpl) and hepatic lipase (Lipc), including adipose tissue, skeletal muscle, heart, and liver. Expressed at higher levels in tissues that express little or no lipase activity such as testis and pancreas suggesting additional functions in these tissues.

It localises to the endoplasmic reticulum membrane. Functionally, involved in the maturation of specific proteins in the endoplasmic reticulum. Required for maturation and transport of active lipoprotein lipase (LPL) through the secretory pathway. Each LMF1 molecule chaperones 50 or more molecules of LPL. This Mus musculus (Mouse) protein is Lipase maturation factor 1 (Lmf1).